The sequence spans 505 residues: 2,3-bisphosphoglycerate-independent phosphoglycerate mutase (505 aa).

D12 and S62 together coordinate Mn(2+). Residue S62 is the Phosphoserine intermediate of the active site. Residues H123, 153–154 (RD), R185, R191, 257–260 (RPDR), and K330 contribute to the substrate site. Mn(2+) contacts are provided by D397, H401, D438, H439, and H456.

Belongs to the BPG-independent phosphoglycerate mutase family. Monomer. Requires Mn(2+) as cofactor.

It catalyses the reaction (2R)-2-phosphoglycerate = (2R)-3-phosphoglycerate. Its pathway is carbohydrate degradation; glycolysis; pyruvate from D-glyceraldehyde 3-phosphate: step 3/5. Catalyzes the interconversion of 2-phosphoglycerate and 3-phosphoglycerate. The polypeptide is 2,3-bisphosphoglycerate-independent phosphoglycerate mutase (Staphylococcus aureus (strain Mu50 / ATCC 700699)).